The primary structure comprises 94 residues: Integration host factor subunit beta (94 aa).

It belongs to the bacterial histone-like protein family. As to quaternary structure, heterodimer of an alpha and a beta chain.

This protein is one of the two subunits of integration host factor, a specific DNA-binding protein that functions in genetic recombination as well as in transcriptional and translational control. The chain is Integration host factor subunit beta from Haemophilus influenzae (strain PittGG).